We begin with the raw amino-acid sequence, 137 residues long: Bacteriohemerythrin (137 aa).

Fe cation contacts are provided by His21, His53, Glu57, His72, His76, His112, and Asp117.

It belongs to the hemerythrin family. Monomer.

Its function is as follows. Oxygen-binding protein. May be involved in a storage mechanism or for delivery to oxygen-requiring enzymes. The oxygen-binding site contains two iron atoms. This chain is Bacteriohemerythrin, found in Ralstonia nicotianae (strain ATCC BAA-1114 / GMI1000) (Ralstonia solanacearum).